The following is a 273-amino-acid chain: Petrobactin import ATP-binding protein FpuD (273 aa).

The ABC transporter domain occupies 5 to 241 (LETKRLTLSY…KLVRDVFRME (237 aa)). Residue 37–44 (GSNGCGKS) participates in ATP binding.

Belongs to the ABC transporter superfamily. In terms of assembly, the complex is composed of two ATP-binding proteins (FpuD), two transmembrane proteins (FpuB) and a solute-binding protein (FpuA).

Its subcellular location is the cell membrane. The catalysed reaction is a Fe(III)-siderophore(out) + ATP + H2O = a Fe(III)-siderophore(in) + ADP + phosphate + H(+). In terms of biological role, part of an ABC transporter complex involved in ferric-petrobactin uptake. Probably responsible for energy coupling to the transport system. The polypeptide is Petrobactin import ATP-binding protein FpuD (Bacillus anthracis).